A 373-amino-acid chain; its full sequence is 2-phosphonomethylmalate synthase (373 aa).

Residues 5–256 form the Pyruvate carboxyltransferase domain; the sequence is LVLEDTTLRD…DLGIDLTKLK (252 aa).

This sequence belongs to the alpha-IPM synthase/homocitrate synthase family.

The enzyme catalyses 3-phosphonopyruvate + acetyl-CoA + H2O = (R)-2-(phosphonomethyl)malate + CoA + H(+). It participates in antibiotic biosynthesis. Functionally, acyltransferase involved in the biosynthesis of the phosphonate antibiotic FR-900098, a potent antimalarial agent that acts as an inhibitor of 1-deoxy-D-xylulose 5-phosphate reductoisomerase (DXR), the first enzyme in the nonmevalonate pathway for isoprenoid biosynthesis. Catalyzes the condensation between acetyl-CoA and phosphonopyruvate to yield (R)-2-(phosphonomethyl)malate. In Streptomyces rubellomurinus (strain ATCC 31215), this protein is 2-phosphonomethylmalate synthase.